We begin with the raw amino-acid sequence, 512 residues long: Maturase K (512 aa).

This sequence belongs to the intron maturase 2 family. MatK subfamily.

Its subcellular location is the plastid. The protein localises to the chloroplast. Usually encoded in the trnK tRNA gene intron. Probably assists in splicing its own and other chloroplast group II introns. The protein is Maturase K of Oenothera parviflora (Small-flowered evening primrose).